A 329-amino-acid polypeptide reads, in one-letter code: Serpentine receptor class alpha-4 (329 aa).

Helical transmembrane passes span 25–45 (IIVLIPVFITFIFTYYAIKVV), 103–123 (LYLEVFVSGVAGMVYGQTGLL), 144–164 (GLAISVSVLCLSFITSRLIIW), 188–208 (YFQSICTLLALFNLVTSILIW), 238–258 (ICFLTFVQFIFFLVYSLGFFI), and 273–293 (LVAVWLYTPPYIAASFPILIF).

This sequence belongs to the nematode receptor-like protein sra family.

The protein resides in the membrane. This Caenorhabditis elegans protein is Serpentine receptor class alpha-4 (sra-4).